A 64-amino-acid polypeptide reads, in one-letter code: Putative neurotoxin 4 (64 aa).

An N-terminal signal peptide occupies residues 1 to 18 (MKSKFAVLFFTLFLLALA).

It belongs to the scolopendra neurotoxin 6 family. Contains 3 disulfide bonds. As to expression, expressed by the venom gland.

The protein localises to the secreted. In Scolopendra mutilans (Chinese red-headed centipede), this protein is Putative neurotoxin 4.